A 198-amino-acid polypeptide reads, in one-letter code: Recombination protein RecR (198 aa).

The C4-type zinc-finger motif lies at 57 to 72 (CSVCCNLTDQDPCQIC). A Toprim domain is found at 80–175 (STICVVQEPR…KVTRIARGLP (96 aa)).

Belongs to the RecR family.

Functionally, may play a role in DNA repair. It seems to be involved in an RecBC-independent recombinational process of DNA repair. It may act with RecF and RecO. In Symbiobacterium thermophilum (strain DSM 24528 / JCM 14929 / IAM 14863 / T), this protein is Recombination protein RecR.